The following is a 343-amino-acid chain: Versiconal hemiacetal acetate reductase (343 aa).

The active-site Proton donor is the Tyr59. His144 is a binding site for substrate. Ser229–Pro239 is a binding site for NADP(+).

Belongs to the aldo/keto reductase family. Aldo/keto reductase 2 subfamily.

It carries out the reaction (2S)-versicolorone + NADP(+) = 1'-hydroxyversicolorone + NADPH + H(+). It catalyses the reaction (3S)-versiconol acetate + NADP(+) = (2S,3S)-versiconal hemiacetal acetate + NADPH + H(+). The enzyme catalyses (S)-versiconol + NADP(+) = (2S-3S)-versiconal hemiacetal + NADPH + H(+). Functionally, catalyzes 3 reactions: from hydroxyversicolorone (HVN) to versicolorone (VONE), from versiconal hemiacetal acetate (VHA) to versiconol acetate (VOAc) and from versiconal (VHOH) to versiconol (VOH). Probably not an aflatoxin biosynthesis gene: may be involved in the vertical branching steps connecting the main pathway from HVN to VHOH with the side pathway from VONE to VOH. In Aspergillus parasiticus, this protein is Versiconal hemiacetal acetate reductase (vrdA).